Consider the following 309-residue polypeptide: HPr kinase/phosphorylase (309 aa).

Residues His138 and Lys159 contribute to the active site. 153–160 (GDSGIGKS) serves as a coordination point for ATP. A Mg(2+)-binding site is contributed by Ser160. Asp177 (proton acceptor; for phosphorylation activity. Proton donor; for dephosphorylation activity) is an active-site residue. The important for the catalytic mechanism of both phosphorylation and dephosphorylation stretch occupies residues 201–210 (LEIRGVGIID). Position 202 (Glu202) interacts with Mg(2+). Arg243 is an active-site residue. Residues 264 to 269 (PVKTGR) are important for the catalytic mechanism of dephosphorylation.

This sequence belongs to the HPrK/P family. As to quaternary structure, homohexamer. It depends on Mg(2+) as a cofactor.

It catalyses the reaction [HPr protein]-L-serine + ATP = [HPr protein]-O-phospho-L-serine + ADP + H(+). The enzyme catalyses [HPr protein]-O-phospho-L-serine + phosphate + H(+) = [HPr protein]-L-serine + diphosphate. Its activity is regulated as follows. Kinase activity is slightly activated by fructose 1,6-bisphosphate (FBP) at low ATP concentrations, and is inhibited by inorganic phosphate (Pi). Moreover, FBP, phosphoenolpyruvate and 2-phosphoglycerate, but not fructose 1-P, fructose 6-P, and ribulose 1,5-bisphosphate protect kinase activity against inhibition by Pi. Dephosphorylation of P-Ser-HPr by S.salivarius HPrK/P is strictly dependent on the presence of Pi, and is inhibited by FBP. FBP seems to modulate HPrK/P activities by enhancing affinity of the active site for ATP and, conversely, lowering the affinity for Pi. In terms of biological role, catalyzes the ATP- as well as probably the pyrophosphate-dependent phosphorylation of 'Ser-46' in HPr, a phosphocarrier protein of the phosphoenolpyruvate-dependent sugar phosphotransferase system (PTS). HprK/P also catalyzes the pyrophosphate-producing, inorganic phosphate-dependent dephosphorylation (phosphorolysis) of seryl-phosphorylated HPr (P-Ser-HPr). The two antagonistic activities of HprK/P are regulated by several intracellular metabolites, which change their concentration in response to the absence or presence of rapidly metabolisable carbon sources (glucose, fructose, etc.) in the growth medium. Therefore, by controlling the phosphorylation state of HPr, the bifunctional HPr kinase/phosphorylase is a sensor enzyme that plays a major role in the regulation of carbon metabolism and sugar transport: it probably mediates carbon catabolite repression (CCR), and regulates PTS-catalyzed carbohydrate uptake and inducer exclusion. The polypeptide is HPr kinase/phosphorylase (hprK) (Streptococcus salivarius).